The chain runs to 82 residues: Small ribosomal subunit protein bS16 (82 aa).

It belongs to the bacterial ribosomal protein bS16 family.

This chain is Small ribosomal subunit protein bS16, found in Actinobacillus succinogenes (strain ATCC 55618 / DSM 22257 / CCUG 43843 / 130Z).